The primary structure comprises 651 residues: Intraflagellar transport protein 70A (651 aa).

7 TPR repeats span residues 8–41, 42–75, 140–173, 175–207, 379–410, 411–443, and 445–478; these read DGEY…HTKS, RAAL…HPEV, PDYD…LGYQ, DLAY…GIRE, VTKQ…EKYI, PVLM…CNEH, and TWKL…HYEN. The stretch at 494-521 forms a coiled coil; sequence YIMTSQNEEAEELMRKIEKEEEQISYDD. A TPR 8 repeat occupies 530–563; sequence CIVNLVIGTLYCAKGNYDFGISRVIKSLEPYNKK.

This sequence belongs to the TTC30/dfy-1/fleer family. In terms of tissue distribution, localizes to the cilia of many ciliated epithelial cell types including pronephric cells, olfactory placode, the brain ventricle and lateral line organs.

It localises to the cell projection. The protein resides in the cilium. Its function is as follows. Plays a role in anterograde intraflagellar transport (IFT), the process by which cilia precursors are transported from the base of the cilium to the site of their incorporation at the tip. Required for polyglutamylation of axonemal tubulin, which is a prerequisite for correct assembly of cilia and for normal cilia beat amplitude. Does not seem to be required for neuronal microtubule polyglutamylation. The sequence is that of Intraflagellar transport protein 70A (ift70a) from Danio rerio (Zebrafish).